Reading from the N-terminus, the 161-residue chain is 6,7-dimethyl-8-ribityllumazine synthase (161 aa).

5-amino-6-(D-ribitylamino)uracil contacts are provided by residues tryptophan 31, 63–65 (SFE), and 85–87 (VVI). 90 to 91 (GT) lines the (2S)-2-hydroxy-3-oxobutyl phosphate pocket. The active-site Proton donor is histidine 93. Phenylalanine 118 is a binding site for 5-amino-6-(D-ribitylamino)uracil. Arginine 132 is a (2S)-2-hydroxy-3-oxobutyl phosphate binding site.

It belongs to the DMRL synthase family.

It carries out the reaction (2S)-2-hydroxy-3-oxobutyl phosphate + 5-amino-6-(D-ribitylamino)uracil = 6,7-dimethyl-8-(1-D-ribityl)lumazine + phosphate + 2 H2O + H(+). Its pathway is cofactor biosynthesis; riboflavin biosynthesis; riboflavin from 2-hydroxy-3-oxobutyl phosphate and 5-amino-6-(D-ribitylamino)uracil: step 1/2. Its function is as follows. Catalyzes the formation of 6,7-dimethyl-8-ribityllumazine by condensation of 5-amino-6-(D-ribitylamino)uracil with 3,4-dihydroxy-2-butanone 4-phosphate. This is the penultimate step in the biosynthesis of riboflavin. The chain is 6,7-dimethyl-8-ribityllumazine synthase from Pseudarthrobacter chlorophenolicus (strain ATCC 700700 / DSM 12829 / CIP 107037 / JCM 12360 / KCTC 9906 / NCIMB 13794 / A6) (Arthrobacter chlorophenolicus).